The chain runs to 308 residues: Taste receptor type 2 member 43 (308 aa).

Met-1 is a topological domain (extracellular). The chain crosses the membrane as a helical span at residues 2–22; sequence ITFLPIIFSILVVFTFVIGNF. Over 23–46 the chain is Cytoplasmic; sequence ANGFIALVNSIEWVKRQKISFADQ. A helical membrane pass occupies residues 47–67; the sequence is ILTALAVSRVGLLWILLLNWY. The Extracellular portion of the chain corresponds to 68–86; that stretch reads STVLNPAFYSVEVRTIAYN. A helical transmembrane segment spans residues 87-107; it reads LWAVINHFSNWLATSLSIFYL. The Cytoplasmic portion of the chain corresponds to 108-126; the sequence is LKIANFSNLIFLHLRRRVK. A helical transmembrane segment spans residues 127–147; that stretch reads SVVLVILWGPLLFLVCHLFVV. The Extracellular segment spans residues 148–178; the sequence is NMNEIIQTKEYEGNMTWKSKLRSAMYLSNTT. N-linked (GlcNAc...) asparagine glycosylation is found at Asn-161 and Asn-176. Residues 179–199 form a helical membrane-spanning segment; sequence VTILANLVPFILTLISFLLLI. At 200–229 the chain is on the cytoplasmic side; that stretch reads CSLCKHLKKMQLRDKGSQDPSTKVHIKALQ. A helical transmembrane segment spans residues 230 to 249; it reads TVISLSLCAIYFLSIMISSW. Over 250-258 the chain is Extracellular; the sequence is SLGRVENKA. The chain crosses the membrane as a helical span at residues 259-279; it reads IFMFCKAIRFSYPSAHAFILI. Topologically, residues 280–308 are cytoplasmic; sequence WGNKKLKQTLLSVLWNVRYCVKGQKLQSP.

This sequence belongs to the G-protein coupled receptor T2R family.

The protein resides in the membrane. The protein localises to the cell projection. Its subcellular location is the cilium membrane. In terms of biological role, gustducin-coupled receptor immplicated in the perception of bitter compounds in the oral cavity and the gastrointestinal tract. Signals through PLCB2 and the calcium-regulated cation channel TRPM5. Activated by the sulfonyl amide sweeteners saccharin and acesulfame K. In airway epithelial cells, binding of bitter compounds increases the intracellular calcium ion concentration and stimulates ciliary beat frequency. May act as chemosensory receptors in airway epithelial cells to detect and eliminate potential noxious agents from the airways. The polypeptide is Taste receptor type 2 member 43 (TAS2R43) (Macaca mulatta (Rhesus macaque)).